We begin with the raw amino-acid sequence, 316 residues long: Zinc finger protein 330 (316 aa).

The tract at residues Met-1 to Ala-24 is disordered. The Nuclear localization signal motif lies at Lys-3–Lys-11. Residues Lys-10–Leu-22 are compositionally biased toward basic and acidic residues. 4 consecutive C4-type zinc fingers follow at residues Cys-42–Cys-58, Cys-67–Cys-104, Cys-129–Cys-149, and Cys-175–Cys-189. The interval Ser-227–Asn-299 is disordered. Residues Asp-268–Ser-291 are compositionally biased toward acidic residues. The residue at position 287 (Ser-287) is a Phosphoserine.

The protein belongs to the NOA36 family.

The protein localises to the nucleus. It localises to the nucleolus. It is found in the chromosome. The protein resides in the centromere. The sequence is that of Zinc finger protein 330 (Znf330) from Mus musculus (Mouse).